A 264-amino-acid chain; its full sequence is Phosphonoacetaldehyde hydrolase (264 aa).

Residue D9 is the Nucleophile of the active site. Mg(2+) contacts are provided by D9 and A11. K50 (schiff-base intermediate with substrate) is an active-site residue. D183 is a binding site for Mg(2+).

This sequence belongs to the HAD-like hydrolase superfamily. PhnX family. Homodimer. Requires Mg(2+) as cofactor.

It carries out the reaction phosphonoacetaldehyde + H2O = acetaldehyde + phosphate + H(+). Its function is as follows. Involved in phosphonate degradation. The sequence is that of Phosphonoacetaldehyde hydrolase from Bacillus mycoides (strain KBAB4) (Bacillus weihenstephanensis).